A 478-amino-acid polypeptide reads, in one-letter code: UDP-glycosyltransferase 71B5 (478 aa).

UDP-alpha-D-glucose-binding positions include S280, 347–349 (APQ), 364–372 (HCGWNSILE), and 386–389 (YAEQ).

Belongs to the UDP-glycosyltransferase family.

Possesses low quercetin 3-O-glucosyltransferase activity in vitro. The sequence is that of UDP-glycosyltransferase 71B5 (UGT71B5) from Arabidopsis thaliana (Mouse-ear cress).